We begin with the raw amino-acid sequence, 149 residues long: Deoxyuridine 5'-triphosphate nucleotidohydrolase (149 aa).

Substrate is bound by residues 68–70, Asn81, 85–87, and Met95; these read RSG and LID.

Belongs to the dUTPase family. Mg(2+) is required as a cofactor.

It catalyses the reaction dUTP + H2O = dUMP + diphosphate + H(+). Its pathway is pyrimidine metabolism; dUMP biosynthesis; dUMP from dCTP (dUTP route): step 2/2. In terms of biological role, this enzyme is involved in nucleotide metabolism: it produces dUMP, the immediate precursor of thymidine nucleotides and it decreases the intracellular concentration of dUTP so that uracil cannot be incorporated into DNA. The polypeptide is Deoxyuridine 5'-triphosphate nucleotidohydrolase (Janthinobacterium sp. (strain Marseille) (Minibacterium massiliensis)).